We begin with the raw amino-acid sequence, 215 residues long: MLNLVVNREIAFSLLPLLHQFDRKLLEQFFADGLRLIHYDVMDHFVDNTVFQGEHLDELQQIGFQVNVHLMVQALEQILPVYLHHQAVKRISFHVEPFDIPTIKHFIAQIKQAGKQVGLAFKFTTPLVNYERLVQQLDFVTLMSVPPGKGGQAFNSAVFNNLKQAHKYHCSIEIDGGIKLDNIHQIQDDVNFIVMGSGFIKLERWQRQQLLKTNQ.

Residue Ser13 coordinates substrate. The a divalent metal cation site is built by His38, Asp40, His69, and Asp175. Asp40 (proton acceptor) is an active-site residue. Substrate is bound by residues His69, 175-177 (DGG), and 196-197 (GS). The active-site Proton donor is the Asp175.

The protein belongs to the ribulose-phosphate 3-epimerase family. Requires a divalent metal cation as cofactor.

The catalysed reaction is D-ribulose 5-phosphate = D-xylulose 5-phosphate. The protein operates within carbohydrate degradation. Functionally, catalyzes the reversible epimerization of D-ribulose 5-phosphate to D-xylulose 5-phosphate. The chain is Ribulose-phosphate 3-epimerase from Mycoplasma pneumoniae (strain ATCC 29342 / M129 / Subtype 1) (Mycoplasmoides pneumoniae).